The chain runs to 728 residues: Polyribonucleotide nucleotidyltransferase (728 aa).

Mg(2+)-binding residues include D488 and D494. The KH domain occupies 555 to 614; the sequence is PRMITMKIHPDKIREVIGKGGSTIQALTKETGTTIDIQEDGTITIASTSTDGMAEAKRRI. Positions 624 to 692 constitute an S1 motif domain; that stretch reads GKIYNGTVLK…EKGRLRLSLK (69 aa). The disordered stretch occupies residues 702–728; it reads ISPVNAGEAAPAPAPAAAPATPSDQQQ. Residues 710-721 show a composition bias toward low complexity; sequence AAPAPAPAAAPA.

The protein belongs to the polyribonucleotide nucleotidyltransferase family. Mg(2+) is required as a cofactor.

It localises to the cytoplasm. The catalysed reaction is RNA(n+1) + phosphate = RNA(n) + a ribonucleoside 5'-diphosphate. Its function is as follows. Involved in mRNA degradation. Catalyzes the phosphorolysis of single-stranded polyribonucleotides processively in the 3'- to 5'-direction. This is Polyribonucleotide nucleotidyltransferase from Cupriavidus pinatubonensis (strain JMP 134 / LMG 1197) (Cupriavidus necator (strain JMP 134)).